We begin with the raw amino-acid sequence, 253 residues long: Triosephosphate isomerase (253 aa).

Residues asparagine 12 and lysine 14 each contribute to the substrate site. Histidine 96 functions as the Electrophile in the catalytic mechanism. The Proton acceptor role is filled by glutamate 169.

The protein belongs to the triosephosphate isomerase family. Homodimer.

The protein localises to the cytoplasm. The enzyme catalyses D-glyceraldehyde 3-phosphate = dihydroxyacetone phosphate. The protein operates within carbohydrate biosynthesis; gluconeogenesis. Its pathway is carbohydrate degradation; glycolysis; D-glyceraldehyde 3-phosphate from glycerone phosphate: step 1/1. Antigen to the host M.1 monoclonal antibody. The sequence is that of Triosephosphate isomerase (TPI) from Schistosoma mansoni (Blood fluke).